Here is a 1364-residue protein sequence, read N- to C-terminus: DNA-directed RNA polymerase subunit beta' (1364 aa).

Residues 1 to 42 (MTSSSSKSNKSRKSSKAAKDTTPVHESASRPLSKTPPPFRNH) are disordered. Cys-250, Cys-317, Cys-324, and Cys-327 together coordinate Zn(2+).

Belongs to the RNA polymerase beta' chain family. RpoC2 subfamily. In cyanobacteria the RNAP catalytic core is composed of 2 alpha, 1 beta, 1 beta', 1 gamma and 1 omega subunit. When a sigma factor is associated with the core the holoenzyme is formed, which can initiate transcription. Requires Zn(2+) as cofactor.

The enzyme catalyses RNA(n) + a ribonucleoside 5'-triphosphate = RNA(n+1) + diphosphate. DNA-dependent RNA polymerase catalyzes the transcription of DNA into RNA using the four ribonucleoside triphosphates as substrates. This chain is DNA-directed RNA polymerase subunit beta', found in Parasynechococcus marenigrum (strain WH8102).